A 59-amino-acid chain; its full sequence is Large ribosomal subunit protein bL32 (59 aa).

A disordered region spans residues 1–24 (MAVQQNKKSPSKRGMHRSHDFLTS).

It belongs to the bacterial ribosomal protein bL32 family.

The sequence is that of Large ribosomal subunit protein bL32 from Ralstonia nicotianae (strain ATCC BAA-1114 / GMI1000) (Ralstonia solanacearum).